An 876-amino-acid polypeptide reads, in one-letter code: Valine--tRNA ligase (876 aa).

The 'HIGH' region motif lies at 44 to 54 (PNVTGKLHLGH). The short motif at 520–524 (KMSKS) is the 'KMSKS' region element. ATP is bound at residue Lys523. A coiled-coil region spans residues 805-876 (LEGLIDMDKE…VKARIEQLKA (72 aa)).

It belongs to the class-I aminoacyl-tRNA synthetase family. ValS type 1 subfamily. As to quaternary structure, monomer.

It localises to the cytoplasm. It catalyses the reaction tRNA(Val) + L-valine + ATP = L-valyl-tRNA(Val) + AMP + diphosphate. In terms of biological role, catalyzes the attachment of valine to tRNA(Val). As ValRS can inadvertently accommodate and process structurally similar amino acids such as threonine, to avoid such errors, it has a 'posttransfer' editing activity that hydrolyzes mischarged Thr-tRNA(Val) in a tRNA-dependent manner. This Staphylococcus aureus (strain Mu3 / ATCC 700698) protein is Valine--tRNA ligase.